Consider the following 206-residue polypeptide: Large ribosomal subunit protein bL25 (206 aa).

Belongs to the bacterial ribosomal protein bL25 family. CTC subfamily. As to quaternary structure, part of the 50S ribosomal subunit; part of the 5S rRNA/L5/L18/L25 subcomplex. Contacts the 5S rRNA. Binds to the 5S rRNA independently of L5 and L18.

Functionally, this is one of the proteins that binds to the 5S RNA in the ribosome where it forms part of the central protuberance. This Paraburkholderia phytofirmans (strain DSM 17436 / LMG 22146 / PsJN) (Burkholderia phytofirmans) protein is Large ribosomal subunit protein bL25.